The primary structure comprises 316 residues: Transaldolase (316 aa).

Residue Lys-131 is the Schiff-base intermediate with substrate of the active site.

Belongs to the transaldolase family. Type 1 subfamily. In terms of assembly, homodimer.

It localises to the cytoplasm. The catalysed reaction is D-sedoheptulose 7-phosphate + D-glyceraldehyde 3-phosphate = D-erythrose 4-phosphate + beta-D-fructose 6-phosphate. The protein operates within carbohydrate degradation; pentose phosphate pathway; D-glyceraldehyde 3-phosphate and beta-D-fructose 6-phosphate from D-ribose 5-phosphate and D-xylulose 5-phosphate (non-oxidative stage): step 2/3. Functionally, transaldolase is important for the balance of metabolites in the pentose-phosphate pathway. This is Transaldolase from Buchnera aphidicola subsp. Baizongia pistaciae (strain Bp).